We begin with the raw amino-acid sequence, 1097 residues long: MGDPLERLGSQASMATESVMKEDLCLEIDPPLTESVATAEDWRRALGKVVPAVVVLRTTACRAFDTESAGASYATGFIVDKRRGIILTNRHVVKPGPVVAEAMFVNREEIPIYPVYRDPVHDFGFFCYDPSAVQFLTYQEIPLAPEAASVGLEIRVVGNDSGEKVSILAGTLARLDRDAPHYKKDGYNDFNTFYMQAASGTKGGSSGSPVIDWQGRAVALNAGSKSSSASAFFLPLQRVVRALSFLQKSIDSRTDKPKAVHIPRGTLQMTFLHKGFDEIRRLGLRSETEQVVRHASPTGETGMLVVDSVVPSGPADKHLEPGDVLVRVNGTVLTQFLNLENLLDDGVGQILELEIERGGQPLSVSVSVQDLHSITPDHFLEVSGAVIHPLSYQQARNFRFPCGLAYVADPGYMLFRAGVPRHAIIKKVANEDISSLGDLVSVLSKLSRGARVPLEYMSHTDRHRKKSVLVTIDHHEWYAPPQLYTRNDSSGLWDAKPAIEPASVSPSIGNNGFPISQDISLCHHDTEPMHEVNVRGVTDIAAIMETSSGDGSQNDFGSEAKKQRVDEDSSDGIAANGSLYGSEFKSDDAMETDTTVLRDFEGATALSANASLAERAIEPALVMFEVHVPPSCSLDGVHSQHFFGTGIIIYHSSNMGLAVVDKNTVAISASDVMLSFAAFPVEIPGEVVFLHPVHNYALIAYNPSAMDPASASVIRAAELLPEPALQRGDSVYLVGLSRNLQATSRKSIVTNPCAALNIGSADSPRYRATNMEVIELDTDFGSSFSGALTDEQGRIRAIWGSFSTQVKYSSTSSEDHQFVRGIPVYAISQVLEKIITGGNGPALLINGVKRPMPLVRILEVELYPTLLSKARSFGLSDEWIQVLVKKDPVRRQVLRVKGCLAGSKAENLLEQGDMVLAVNKMPVTCFNDIEAACQTLDKGSYSDENLNLTILRQGQELELVVGTDKRDGNGTTRVINWCGCVVQDPHPAVRALGFLPEEGHGVYVTRWCHGSPAHRYGLYALQWIVEVNGKKTPDLNAFADATKELEHGQFVRIRTVHLNGKPRVLTLKQDLHYWPTWELRFDPETALWRRNILKALQ.

Positions 55 to 243 are serine protease; it reads VLRTTACRAF…LPLQRVVRAL (189 aa). Residues 269–366 enclose the PDZ domain; sequence MTFLHKGFDE…RGGQPLSVSV (98 aa). Residue H524 is the Charge relay system of the active site. The span at 546 to 556 shows a compositional bias: polar residues; sequence TSSGDGSQNDF. The disordered stretch occupies residues 546 to 577; it reads TSSGDGSQNDFGSEAKKQRVDEDSSDGIAANG. The segment covering 558–567 has biased composition (basic and acidic residues); that stretch reads SEAKKQRVDE. S785 serves as the catalytic Charge relay system.

It belongs to the peptidase S1C family.

It is found in the cytoplasm. Probable serine protease. The chain is Protease Do-like 7 (DEGP7) from Arabidopsis thaliana (Mouse-ear cress).